The chain runs to 419 residues: BTB/POZ domain-containing protein KCTD20 (419 aa).

The BTB domain maps to 117–191 (EKVTLLVDGT…YKTGIINCPD (75 aa)).

As to quaternary structure, interacts with AKT1; AKT2 and AKT3. Interacts with PPP2CA and PPP1CA. Part of a complex containing MARK4. As to expression, ubiquitously expressed.

The protein resides in the cytoplasm. Functionally, promotes the phosphorylation of AKT family members. This Mus musculus (Mouse) protein is BTB/POZ domain-containing protein KCTD20 (Kctd20).